Here is a 95-residue protein sequence, read N- to C-terminus: Protein TusB (95 aa).

This sequence belongs to the DsrH/TusB family. Heterohexamer, formed by a dimer of trimers. The hexameric TusBCD complex contains 2 copies each of TusB, TusC and TusD. The TusBCD complex interacts with TusE.

It localises to the cytoplasm. Its function is as follows. Part of a sulfur-relay system required for 2-thiolation of 5-methylaminomethyl-2-thiouridine (mnm(5)s(2)U) at tRNA wobble positions. The protein is Protein TusB of Pectobacterium atrosepticum (strain SCRI 1043 / ATCC BAA-672) (Erwinia carotovora subsp. atroseptica).